A 145-amino-acid chain; its full sequence is Large ribosomal subunit protein bL19 (145 aa).

Positions 112-130 (GKSARIKERRPAKAVEKTS) are enriched in basic and acidic residues. The segment at 112 to 145 (GKSARIKERRPAKAVEKTSKPASAKKPAAKANKK) is disordered.

The protein belongs to the bacterial ribosomal protein bL19 family.

Its function is as follows. This protein is located at the 30S-50S ribosomal subunit interface and may play a role in the structure and function of the aminoacyl-tRNA binding site. The sequence is that of Large ribosomal subunit protein bL19 from Malacoplasma penetrans (strain HF-2) (Mycoplasma penetrans).